The chain runs to 87 residues: Small ribosomal subunit protein uS17 (87 aa).

Belongs to the universal ribosomal protein uS17 family. Part of the 30S ribosomal subunit.

Functionally, one of the primary rRNA binding proteins, it binds specifically to the 5'-end of 16S ribosomal RNA. This chain is Small ribosomal subunit protein uS17, found in Bacillus thuringiensis (strain Al Hakam).